Here is a 93-residue protein sequence, read N- to C-terminus: RNA-binding protein Hfq (93 aa).

The Sm domain occupies 9-68 (DPFLNALRKERIPVSIFLVNGIKLQGQIESFDQYVVLLKNAVSQMVYKHAISTVVPARNP). A compositionally biased stretch (low complexity) spans 74–86 (PAMAAGATAAPAA). Positions 74 to 93 (PAMAAGATAAPAADEGYGNQ) are disordered.

Belongs to the Hfq family. Homohexamer.

RNA chaperone that binds small regulatory RNA (sRNAs) and mRNAs to facilitate mRNA translational regulation in response to envelope stress, environmental stress and changes in metabolite concentrations. Also binds with high specificity to tRNAs. The sequence is that of RNA-binding protein Hfq from Alcanivorax borkumensis (strain ATCC 700651 / DSM 11573 / NCIMB 13689 / SK2).